The primary structure comprises 158 residues: Transcriptional repressor NrdR (158 aa).

A zinc finger lies at Cys-3–Cys-34. Residues Ile-49–Asp-139 form the ATP-cone domain.

The protein belongs to the NrdR family. The cofactor is Zn(2+).

Functionally, negatively regulates transcription of bacterial ribonucleotide reductase nrd genes and operons by binding to NrdR-boxes. This Synechococcus sp. (strain CC9311) protein is Transcriptional repressor NrdR.